A 341-amino-acid chain; its full sequence is MIEFRQVSKSFHKKKQTIDALKDVSFTVNRNDIFGVIGYSGAGKSTLVRLVNHLEAASNGQVIVDAHDITNYSDKMMRDIKKDIGMIFQHFNLLNSATVFKNVAMPLILSKKSKTEIKQRVTEMLEFVGLSDKKDQFPDELSGGQKQRVAIARALVTNPKILLCDEATSALDPSTTASILTLLKNVNQTFGITIMMITHEMRVIKDICNRVAVMEKGQVVETGTVKEVFSHPKTTIAQNFVSTVIQTEPSTSLIRRLNDEQVGDFKDYKIFVEETQVTQPIINDLIQICGREVKILFSSMSEIQGNTVCYMWLRFNMDQQFDDTAINQYFKEKNIQFEEVH.

The ABC transporter domain occupies 2–241; it reads IEFRQVSKSF…PKTTIAQNFV (240 aa). An ATP-binding site is contributed by 38-45; sequence GYSGAGKS.

It belongs to the ABC transporter superfamily. Methionine importer (TC 3.A.1.24) family. As to quaternary structure, the complex is composed of two ATP-binding proteins (MetN), two transmembrane proteins (MetI) and a solute-binding protein (MetQ).

The protein resides in the cell membrane. The enzyme catalyses L-methionine(out) + ATP + H2O = L-methionine(in) + ADP + phosphate + H(+). It catalyses the reaction D-methionine(out) + ATP + H2O = D-methionine(in) + ADP + phosphate + H(+). Its function is as follows. Part of the ABC transporter complex MetNIQ involved in methionine import. Responsible for energy coupling to the transport system. This Staphylococcus aureus (strain bovine RF122 / ET3-1) protein is Methionine import ATP-binding protein MetN 1.